We begin with the raw amino-acid sequence, 298 residues long: N-acetylmuramic acid 6-phosphate etherase 2 (298 aa).

The region spanning 51–214 (IVSRFEQGGR…STAAMVRLGR (164 aa)) is the SIS domain. Glu-79 acts as the Proton donor in catalysis. Residue Glu-110 is part of the active site.

It belongs to the GCKR-like family. MurNAc-6-P etherase subfamily. In terms of assembly, homodimer.

It catalyses the reaction N-acetyl-D-muramate 6-phosphate + H2O = N-acetyl-D-glucosamine 6-phosphate + (R)-lactate. It participates in amino-sugar metabolism; N-acetylmuramate degradation. Functionally, specifically catalyzes the cleavage of the D-lactyl ether substituent of MurNAc 6-phosphate, producing GlcNAc 6-phosphate and D-lactate. This is N-acetylmuramic acid 6-phosphate etherase 2 from Bacillus licheniformis (strain ATCC 14580 / DSM 13 / JCM 2505 / CCUG 7422 / NBRC 12200 / NCIMB 9375 / NCTC 10341 / NRRL NRS-1264 / Gibson 46).